Reading from the N-terminus, the 708-residue chain is Fatty acid oxidation complex subunit alpha (708 aa).

The interval 1-190 is enoyl-CoA hydratase; that stretch reads MSQDKAFTME…KAGLVTEVVP (190 aa). Residues 310-708 are 3-hydroxyacyl-CoA dehydrogenase; that stretch reads DSVKRVGVLG…MLENGWNFYQ (399 aa).

The protein in the N-terminal section; belongs to the enoyl-CoA hydratase/isomerase family. This sequence in the central section; belongs to the 3-hydroxyacyl-CoA dehydrogenase family. As to quaternary structure, heterotetramer of two alpha chains (FadJ) and two beta chains (FadI).

It is found in the cytoplasm. It catalyses the reaction a (3S)-3-hydroxyacyl-CoA = a (2E)-enoyl-CoA + H2O. It carries out the reaction a 4-saturated-(3S)-3-hydroxyacyl-CoA = a (3E)-enoyl-CoA + H2O. The enzyme catalyses a (3S)-3-hydroxyacyl-CoA + NAD(+) = a 3-oxoacyl-CoA + NADH + H(+). The catalysed reaction is (3S)-3-hydroxybutanoyl-CoA = (3R)-3-hydroxybutanoyl-CoA. It participates in lipid metabolism; fatty acid beta-oxidation. Catalyzes the formation of a hydroxyacyl-CoA by addition of water on enoyl-CoA. Also exhibits 3-hydroxyacyl-CoA epimerase and 3-hydroxyacyl-CoA dehydrogenase activities. The sequence is that of Fatty acid oxidation complex subunit alpha from Idiomarina loihiensis (strain ATCC BAA-735 / DSM 15497 / L2-TR).